The following is a 52-amino-acid chain: Conotoxin Cal9.2c (52 aa).

Positions lysine 1 to leucine 6 are excised as a propeptide. Disulfide bonds link cysteine 14–cysteine 31, cysteine 19–cysteine 41, and cysteine 21–cysteine 46.

In terms of tissue distribution, expressed by the venom duct.

Its subcellular location is the secreted. Its function is as follows. Probable neurotoxin with unknown target. Possibly targets ion channels. This Californiconus californicus (California cone) protein is Conotoxin Cal9.2c.